The primary structure comprises 65 residues: Large ribosomal subunit protein uL29 (65 aa).

This sequence belongs to the universal ribosomal protein uL29 family.

The protein is Large ribosomal subunit protein uL29 of Acidithiobacillus ferrooxidans (strain ATCC 23270 / DSM 14882 / CIP 104768 / NCIMB 8455) (Ferrobacillus ferrooxidans (strain ATCC 23270)).